Consider the following 403-residue polypeptide: Acetate kinase (403 aa).

Asn-7 is a binding site for Mg(2+). Lys-14 is a binding site for ATP. Substrate is bound at residue Arg-90. Asp-147 functions as the Proton donor/acceptor in the catalytic mechanism. ATP is bound by residues 207–211 (HIGNG), 283–285 (DMR), and 331–335 (GVGEN). Glu-386 serves as a coordination point for Mg(2+).

Belongs to the acetokinase family. Homodimer. Mg(2+) is required as a cofactor. Requires Mn(2+) as cofactor.

Its subcellular location is the cytoplasm. It catalyses the reaction acetate + ATP = acetyl phosphate + ADP. It functions in the pathway metabolic intermediate biosynthesis; acetyl-CoA biosynthesis; acetyl-CoA from acetate: step 1/2. Functionally, catalyzes the formation of acetyl phosphate from acetate and ATP. Can also catalyze the reverse reaction. In Thermotoga petrophila (strain ATCC BAA-488 / DSM 13995 / JCM 10881 / RKU-1), this protein is Acetate kinase.